The sequence spans 113 residues: Large ribosomal subunit protein uL22 (113 aa).

Belongs to the universal ribosomal protein uL22 family. As to quaternary structure, part of the 50S ribosomal subunit.

Its function is as follows. This protein binds specifically to 23S rRNA; its binding is stimulated by other ribosomal proteins, e.g. L4, L17, and L20. It is important during the early stages of 50S assembly. It makes multiple contacts with different domains of the 23S rRNA in the assembled 50S subunit and ribosome. In terms of biological role, the globular domain of the protein is located near the polypeptide exit tunnel on the outside of the subunit, while an extended beta-hairpin is found that lines the wall of the exit tunnel in the center of the 70S ribosome. In Xylella fastidiosa (strain M12), this protein is Large ribosomal subunit protein uL22.